Reading from the N-terminus, the 116-residue chain is uncharacterized protein (116 aa).

This is an uncharacterized protein from Homo sapiens (Human).